The primary structure comprises 458 residues: SH2 domain-containing protein 7 (458 aa).

One can recognise an SH2 domain in the interval W51 to C142. 2 disordered regions span residues R204–G235 and A267–S326. Positions P278–N288 are enriched in basic and acidic residues. The segment covering Q304–S326 has biased composition (polar residues).

In Mus musculus (Mouse), this protein is SH2 domain-containing protein 7 (Sh2d7).